The following is a 323-amino-acid chain: UDP-galactose/UDP-glucose transporter 7 (323 aa).

At 1–10 (MEVQAEMEPT) the chain is on the cytoplasmic side. The chain crosses the membrane as a helical span at residues 11–31 (SSISLVAAVSYGIASMAMVFI). Residues 32–35 (NKAV) lie on the Lumenal side of the membrane. Residues 36-58 (IMQYPHSMTVLTLQQLATSLLIH) traverse the membrane as a helical segment. At 59-78 (FGRRMGYTRAKGIDMATAKK) the chain is on the cytoplasmic side. Residues 79-97 (LLPVSIFYNANVAFALASL) traverse the membrane as a helical segment. Over 98-101 (KGVN) the chain is Lumenal. The helical transmembrane segment at 102-124 (IPMYIAIKRLTPLAVLISGVLFG) threads the bilayer. The Cytoplasmic portion of the chain corresponds to 125-132 (KGKPTTQV). The chain crosses the membrane as a helical span at residues 133–153 (ALSVLLTAAGCVIAALGDFSF). Residue D154 is a topological domain, lumenal. The chain crosses the membrane as a helical span at residues 155–175 (LFGYGLALTSVFFQTMYLVLV). The Cytoplasmic segment spans residues 176-186 (EKSGAEDGLSS). Residues 187-207 (IEIMFYNSFLSLPFLSILIIV) form a helical membrane-spanning segment. The Lumenal segment spans residues 208–226 (TGEFPNSLSLLLAKCSYLP). The helical transmembrane segment at 227 to 247 (FLVILILSLVMGIVLNFTMFL) threads the bilayer. At 248-252 (CTIVN) the chain is on the cytoplasmic side. A helical transmembrane segment spans residues 253–275 (SALTTTIVGVLKGVGSTTLGFVL). Residues 276–278 (LGG) are Lumenal-facing. A helical transmembrane segment spans residues 279 to 301 (VEVHALNVSGLVVNTAGGVWYSY). Residues 302–323 (AKYRQKKAKPAKLMSDLEAHKK) are Cytoplasmic-facing.

This sequence belongs to the TPT transporter family. UGnT (TC 2.A.7.15) subfamily. As to expression, widely expressed with highest expression in roots.

It is found in the golgi apparatus membrane. Functionally, nucleotide-sugar transporter that transports UDP-glucose and UDP-galactose. Plays a role in lateral root and root hair development. This Arabidopsis thaliana (Mouse-ear cress) protein is UDP-galactose/UDP-glucose transporter 7.